The chain runs to 218 residues: Sodium channel regulatory subunit beta-1 (218 aa).

Residues 1–18 (MGRLLAFVVGAALVSSAW) form the signal peptide. Over 19–157 (GGCVEVDSET…DKANRDMASI (139 aa)) the chain is Extracellular. 2 disulfide bridges follow: cysteine 21–cysteine 43 and cysteine 40–cysteine 121. Residues 22-150 (VEVDSETEAV…KIHLEVVDKA (129 aa)) form the Ig-like C2-type domain. Residues asparagine 93, asparagine 110, asparagine 114, and asparagine 135 are each glycosylated (N-linked (GlcNAc...) asparagine). The helical transmembrane segment at 158-179 (VSEIMMYVLIVVLTIWLVAEMV) threads the bilayer. Over 180–218 (YCYKKIAAATEAAAQENASEYLAITSESKENCTGVQVAE) the chain is Cytoplasmic.

Belongs to the sodium channel auxiliary subunit SCN1B (TC 8.A.17) family. A voltage-gated sodium (Nav) channel consists of an ion-conducting pore-forming alpha subunit functional on its own that is regulated by one or more beta subunits. Interacts with SCN1A; regulatory subunit of SCN1A/Nav1.1. Interacts with SCN3A; regulatory subunit of SCN3A/Nav1.3. Interacts with SCN4A; regulatory subunit of SCN4A/Nav1.4. Interacts with SCN5A; regulatory subunit of SCN5A/Nav1.5. Interacts with SCN8A; regulatory subunit of SCN8A/Nav1.6. Interacts with SCN9A; regulatory subunit of SCN9A/Nav1.7. Interacts with SCN10A; regulatory subunit of SCN10A/Nav1.8. Interacts with NFASC. Interacts with TMEM65.

It is found in the cell membrane. Its subcellular location is the perikaryon. The protein localises to the cell projection. The protein resides in the axon. Its function is as follows. Regulatory subunit of multiple voltage-gated sodium (Nav) channels directly mediating the depolarization of excitable membranes. Navs, also called VGSCs (voltage-gated sodium channels) or VDSCs (voltage-dependent sodium channels), operate by switching between closed and open conformations depending on the voltage difference across the membrane. In the open conformation they allow Na(+) ions to selectively pass through the pore, along their electrochemical gradient. The influx of Na+ ions provokes membrane depolarization, initiating the propagation of electrical signals throughout cells and tissues. The accessory beta subunits participate in localization and functional modulation of the Nav channels. Modulates the activity of SCN1A/Nav1.1, SCN2A/Nav1.2, SCN3A/Nav1.3, SCN4A/Nav1.4, SCN5A/Nav1.5, SCN8A/Nav1.6, SCN9A/Nav1.7 and SCN10A/Nav1.8. The protein is Sodium channel regulatory subunit beta-1 of Oryctolagus cuniculus (Rabbit).